The following is a 493-amino-acid chain: METLLKISGVDKSFPGVKALNNACLSVYAGRVMALMGENGAGKSTLMKVLTGIYSKDAGTIEYLNRSVNFNGPKASQEAGISIIHQELNLVGNLTIAENIFLGREFKTSWGAINWQKMHQEADKLLARLGVTHSSKQLCAELSIGEQQMVEIAKALSFESKVIIMDEPTDALTDTETEALFNVIRELKAENRGIVYISHRLKEIFQICDDVTVLRDGQFIGERVMAEITEDDLIEMMVGRRLDEQYPHLSQEKGECVLDVKHVSGSGIDDVSFKLHAGEIVGVSGLMGAGRTELGKLLYGALPKTAGKVRLKNQEIENRSPQDGLDNGIVYISEDRKGDGLVLGMSVKENMSLTSLDHFSQKGGIRHQAEKMAVDDFILMFNIKTPNRDQQVGLLSGGNQQKVAIARGLMTRPNVLILDEPTRGVDVGAKKEIYQLINEFKKEGLSILMISSDMPEVLGMSDRVLVMREGKISAEFSREEATQEKLLAAAIGK.

2 ABC transporter domains span residues 5-241 (LKIS…VGRR) and 252-491 (EKGE…AAAI). Residue 37–44 (GENGAGKS) participates in ATP binding.

The protein belongs to the ABC transporter superfamily. Ribose importer (TC 3.A.1.2.1) family. The complex is composed of an ATP-binding protein (RbsA), two transmembrane proteins (RbsC) and a solute-binding protein (RbsB).

The protein localises to the cell inner membrane. It carries out the reaction D-ribose(out) + ATP + H2O = D-ribose(in) + ADP + phosphate + H(+). In terms of biological role, part of the ABC transporter complex RbsABC involved in ribose import. Responsible for energy coupling to the transport system. In Haemophilus influenzae (strain ATCC 51907 / DSM 11121 / KW20 / Rd), this protein is Ribose import ATP-binding protein RbsA.